We begin with the raw amino-acid sequence, 325 residues long: Lipoyl synthase (325 aa).

The tract at residues 1–33 (MATVIDTLKARGSEDRAARHPEKQNRPDTPVLR) is disordered. A compositionally biased stretch (basic and acidic residues) spans 8-33 (LKARGSEDRAARHPEKQNRPDTPVLR). The [4Fe-4S] cluster site is built by Cys64, Cys69, Cys75, Cys90, Cys94, Cys97, and Ser303. Residues 76–292 (WSQKHATMMI…EAIARAKGFL (217 aa)) enclose the Radical SAM core domain.

This sequence belongs to the radical SAM superfamily. Lipoyl synthase family. [4Fe-4S] cluster serves as cofactor.

It localises to the cytoplasm. It carries out the reaction [[Fe-S] cluster scaffold protein carrying a second [4Fe-4S](2+) cluster] + N(6)-octanoyl-L-lysyl-[protein] + 2 oxidized [2Fe-2S]-[ferredoxin] + 2 S-adenosyl-L-methionine + 4 H(+) = [[Fe-S] cluster scaffold protein] + N(6)-[(R)-dihydrolipoyl]-L-lysyl-[protein] + 4 Fe(3+) + 2 hydrogen sulfide + 2 5'-deoxyadenosine + 2 L-methionine + 2 reduced [2Fe-2S]-[ferredoxin]. It functions in the pathway protein modification; protein lipoylation via endogenous pathway; protein N(6)-(lipoyl)lysine from octanoyl-[acyl-carrier-protein]: step 2/2. In terms of biological role, catalyzes the radical-mediated insertion of two sulfur atoms into the C-6 and C-8 positions of the octanoyl moiety bound to the lipoyl domains of lipoate-dependent enzymes, thereby converting the octanoylated domains into lipoylated derivatives. The polypeptide is Lipoyl synthase (Caulobacter vibrioides (strain ATCC 19089 / CIP 103742 / CB 15) (Caulobacter crescentus)).